The following is a 182-amino-acid chain: Putative manganese efflux pump MntP (182 aa).

6 helical membrane-spanning segments follow: residues 6–26, 37–57, 71–91, 101–121, 131–151, and 162–182; these read LIPL…VSLG, ILYI…IGMV, HFAG…SSIL, IGIS…SVGL, IITI…GLLI, and YGEI…LFPI.

Belongs to the MntP (TC 9.B.29) family.

It is found in the cell membrane. Its function is as follows. Probably functions as a manganese efflux pump. This is Putative manganese efflux pump MntP from Bacillus anthracis (strain A0248).